The primary structure comprises 882 residues: Translation initiation factor IF-2 (882 aa).

The segment at 28-294 (GIRKSADDSV…SSLQQGFQKP (267 aa)) is disordered. Positions 67-81 (STLNIPGTGGKSKSV) are enriched in polar residues. A compositionally biased stretch (basic and acidic residues) spans 92–209 (VKRDPQEAER…RMAEENKWTD (118 aa)). Basic residues predominate over residues 244–258 (GRGRNAKAARPKKGN). Residues 259–272 (KHAESKADREEARA) are compositionally biased toward basic and acidic residues. In terms of domain architecture, tr-type G spans 381–550 (PRAPVVTIMG…LLQAEVLELK (170 aa)). The interval 390–397 (GHVDHGKT) is G1. 390–397 (GHVDHGKT) serves as a coordination point for GTP. The tract at residues 415-419 (GITQH) is G2. Positions 436–439 (DTPG) are G3. Residues 436–440 (DTPGH) and 490–493 (NKID) contribute to the GTP site. The G4 stretch occupies residues 490-493 (NKID). The interval 526–528 (SAK) is G5. Residue Lys800 is modified to N6-acetyllysine.

Belongs to the TRAFAC class translation factor GTPase superfamily. Classic translation factor GTPase family. IF-2 subfamily.

The protein localises to the cytoplasm. Functionally, one of the essential components for the initiation of protein synthesis. Protects formylmethionyl-tRNA from spontaneous hydrolysis and promotes its binding to the 30S ribosomal subunits. Also involved in the hydrolysis of GTP during the formation of the 70S ribosomal complex. The polypeptide is Translation initiation factor IF-2 (Shigella flexneri serotype 5b (strain 8401)).